The following is a 249-amino-acid chain: MAGHSKWSNIKHRKAAQDAKRGKIFTKLIREITVSAREGGGDPETNPRLRAAIDKALSNNMKRDTIDTAVKRGSGDLEGDNVDELTYEGYGPSGVAVLLECMTDNRNRTVSDVRHAFSKLGGNLGTDGSVAYLFNKKGVISYSDGVTEEQVMEPALEAGAEDILAYDEGSIDVITSPENFGAVKDALDAKGLEASNAEVTQVPDTRVDLDEESARTFLKLLDALEDLDDVQNVYHNADISDEIIARLDD.

This sequence belongs to the TACO1 family.

It localises to the cytoplasm. The sequence is that of Probable transcriptional regulatory protein IL1088 from Idiomarina loihiensis (strain ATCC BAA-735 / DSM 15497 / L2-TR).